The chain runs to 568 residues: Urease subunit alpha (568 aa).

The region spanning 130–568 (GGIDTHIHFI…LPMAQRYFLF (439 aa)) is the Urease domain. Residues His135, His137, and Lys218 each contribute to the Ni(2+) site. N6-carboxylysine is present on Lys218. Substrate is bound at residue His220. Ni(2+) is bound by residues His247 and His273. His321 functions as the Proton donor in the catalytic mechanism. Residue Asp361 coordinates Ni(2+).

This sequence belongs to the metallo-dependent hydrolases superfamily. Urease alpha subunit family. As to quaternary structure, heterotrimer of UreA (gamma), UreB (beta) and UreC (alpha) subunits. Three heterotrimers associate to form the active enzyme. Ni cation is required as a cofactor. In terms of processing, carboxylation allows a single lysine to coordinate two nickel ions.

It localises to the cytoplasm. The catalysed reaction is urea + 2 H2O + H(+) = hydrogencarbonate + 2 NH4(+). The protein operates within nitrogen metabolism; urea degradation; CO(2) and NH(3) from urea (urease route): step 1/1. This Burkholderia pseudomallei (strain 1106a) protein is Urease subunit alpha.